A 354-amino-acid polypeptide reads, in one-letter code: MNGTEGPNFYIPMSNKTGVVRSPFDYPQYYLAEPWKYSVLAAYMFLLILLGLPINFMTLYVTIQHKKLRTPLNYILLNLGVCNHFMVLCGFTITMYTSLHGYFVFGQTGCYFEGFFATLGGEIALWSLVVLAIERYIVVCKPMSNFRFGENHAMMGVAFTWIMALACAVPPLFGWSRYIPEGMQCSCGVDYYTLKPEVNNESFVIYMFVVHFLIPLIIISFCYGRLVCTVKEAAAQQQESATTQKAEKEVTRMVIIMVIFFLICWVPYAYVAFYIFTHQGSEFGPIFMTVPAFFAKSSAIYNPVIYIMLNKQFRNCMITTLCCGKNPFGDDDASSAATSKTEATSVSTSQVSPA.

At 1-36 (MNGTEGPNFYIPMSNKTGVVRSPFDYPQYYLAEPWK) the chain is on the extracellular side. Asn2 carries an N-linked (GlcNAc...) (hybrid) asparagine glycan. N-linked (GlcNAc...) asparagine glycosylation occurs at Asn15. The helical transmembrane segment at 37 to 61 (YSVLAAYMFLLILLGLPINFMTLYV) threads the bilayer. The Cytoplasmic portion of the chain corresponds to 62–73 (TIQHKKLRTPLN). A helical transmembrane segment spans residues 74–96 (YILLNLGVCNHFMVLCGFTITMY). At 97-110 (TSLHGYFVFGQTGC) the chain is on the extracellular side. Cysteines 110 and 187 form a disulfide. Residues 111-133 (YFEGFFATLGGEIALWSLVVLAI) form a helical membrane-spanning segment. The 'Ionic lock' involved in activated form stabilization signature appears at 134–136 (ERY). At 134–152 (ERYIVVCKPMSNFRFGENH) the chain is on the cytoplasmic side. Residues 153 to 173 (AMMGVAFTWIMALACAVPPLF) traverse the membrane as a helical segment. Residues 174 to 202 (GWSRYIPEGMQCSCGVDYYTLKPEVNNES) lie on the Extracellular side of the membrane. Residues 203-224 (FVIYMFVVHFLIPLIIISFCYG) traverse the membrane as a helical segment. Residues 225-252 (RLVCTVKEAAAQQQESATTQKAEKEVTR) are Cytoplasmic-facing. Residues 253 to 274 (MVIIMVIFFLICWVPYAYVAFY) form a helical membrane-spanning segment. Residues 275–286 (IFTHQGSEFGPI) are Extracellular-facing. A helical membrane pass occupies residues 287–308 (FMTVPAFFAKSSAIYNPVIYIM). Residue Lys296 is modified to N6-(retinylidene)lysine. Residues 309-354 (LNKQFRNCMITTLCCGKNPFGDDDASSAATSKTEATSVSTSQVSPA) are Cytoplasmic-facing. 2 S-palmitoyl cysteine lipidation sites follow: Cys322 and Cys323. The interval 332–354 (DASSAATSKTEATSVSTSQVSPA) is disordered. Residues 334-354 (SSAATSKTEATSVSTSQVSPA) show a composition bias toward low complexity.

The protein belongs to the G-protein coupled receptor 1 family. Opsin subfamily. In terms of processing, contains one covalently linked retinal chromophore. Upon light absorption, the covalently bound 11-cis-retinal is converted to all-trans-retinal. After hydrolysis of the Schiff base and release of the covalently bound all-trans-retinal, active rhodopsin is regenerated by binding of a fresh molecule of 11-cis-retinal. As to expression, detected in retina rod photoreceptor cell outer segments (at protein level). Detected in retina.

The protein resides in the membrane. The protein localises to the cell projection. Its subcellular location is the cilium. It is found in the photoreceptor outer segment. Functionally, photoreceptor required for image-forming vision at low light intensity. Required for photoreceptor cell viability after birth. Light-induced isomerization of 11-cis to all-trans retinal triggers a conformational change that activates signaling via G-proteins. Subsequent receptor phosphorylation mediates displacement of the bound G-protein alpha subunit by arrestin and terminates signaling. This is Rhodopsin (RHO) from Lithobates pipiens (Northern leopard frog).